The following is a 365-amino-acid chain: Aminotransferase poxL (365 aa).

Pyridoxal 5'-phosphate is bound at residue R92. K193 is subject to N6-(pyridoxal phosphate)lysine. E229 provides a ligand contact to pyridoxal 5'-phosphate.

This sequence belongs to the class-IV pyridoxal-phosphate-dependent aminotransferase family. Requires pyridoxal 5'-phosphate as cofactor.

The protein operates within secondary metabolite biosynthesis. Aminotransferase; part of the gene cluster that mediates the biosynthesis of oxaleimides, cytotoxic compounds containing an unusual disubstituted succinimide moiety. The first step of the pathway is provided by the HR-PKS poxF that serves in a new mode of collaborative biosynthesis with the PKS-NRPS poxE, by providing the olefin containing amino acid substrate via the synthesis of an ACP-bound dec-4-enoate. The cytochrome P450 monooxygenase poxM-catalyzed oxidation at the alpha-position creates the enzyme-bound 2-hydroxydec-4-enoyl-ACP thioester, which may be prone to spontaneous hydrolysis to yield 2-hydroxydec-4-enoic acid due to increased electrophilicity of the carbonyl. 2-hydroxydec-4-enoic acid can then be further oxidized by poxM to yield the alpha-ketoacid 2-oxodec-4-enoicacid, which is reductively aminated by the aminotransferase poxL to yield (S,E)-2-aminodec-4-enoic acid. The Hybrid PKS-NRPS synthetase poxE then performs condensation between the octaketide product of its PKS modules and the amino group of (S,E)-2-aminodec-4-enoic acid which is activated and incorporated by the adenylation domain. The resulting aminoacyl product can be cyclized by the Diels-Alderase PoxQ and reductively released by the reductive (R) domain of poxE to yield an aldehyde intermediate. The released aldehyde is then substrate for a Knoevenagel condensation by the hydrolyase poxO followed by an oxidation at the 5-position of the pyrrolidone ring. The presence of the olefin from the amino acid building block allows for migration of the substituted allyl group to occur. This allylic transposition reaction takes place in a conjugate addition, semipinacol-like fashion to yield a succinimide intermediate. Iterative two-electron oxidations of the C7 methyl of the succinimide intermediate to the carboxylic acid can be catalyzed by one of two remaining cytochrome P450 monooxygenasess poxC or poxD to yield oxaleimide A. Subsequent oxidation yields the maleimide scaffold oxaleimide I. Both oxaleimide A and oxaleimide I can undergo oxidative modifications in the decalin ring to yield the series of products oxaleimides B to H. The chain is Aminotransferase poxL from Penicillium oxalicum.